The chain runs to 589 residues: (E)-beta-ocimene synthase, chloroplastic (589 aa).

Residues 1 to 25 (MAAHNLCFNSAFVCNVHHQKTQHFP) constitute a chloroplast transit peptide. Arg-302, Asp-339, Asp-343, Arg-480, and Asn-483 together coordinate (2E,6E)-farnesyl diphosphate. Residues Asp-339 and Asp-343 each contribute to the Mg(2+) site. The DDXXD motif motif lies at 339-343 (DDIYD). Residues Asn-483, Thr-487, and Glu-491 each coordinate Mg(2+).

It belongs to the terpene synthase family. Tpsb subfamily. Mg(2+) serves as cofactor. Mn(2+) is required as a cofactor. As to expression, expressed exclusively in flowers.

It localises to the plastid. Its subcellular location is the chloroplast. It carries out the reaction (2E,6E)-farnesyl diphosphate = (3E,6E)-alpha-farnesene + diphosphate. It functions in the pathway secondary metabolite biosynthesis; terpenoid biosynthesis. Its function is as follows. Predominantly involved in monoterpene (C10) biosynthesis. Using GPP as substrate, the major product is (E)-beta-ocimene with minor amounts of (Z)-beta-ocimene and myrcene. Using FPP as substrate, could also be able to synthesize in vitro sesquiterpenes (C15) with (E,E)-alpha-farnesene as the major product and with (Z,E)-alpha-farnesene and (E,E)-beta-farnesene as minor products. This Arabidopsis thaliana (Mouse-ear cress) protein is (E)-beta-ocimene synthase, chloroplastic (TPS02).